The sequence spans 243 residues: ABC transporter arginine-binding protein 1 (243 aa).

An N-terminal signal peptide occupies residues 1 to 19; sequence MKKLVLAALLASFTFGASA.

Belongs to the bacterial solute-binding protein 3 family. In terms of assembly, the complex is composed of two ATP-binding proteins (ArtP), two transmembrane proteins (ArtM and ArtQ) and two solute-binding proteins (ArtJ and ArtI).

Its subcellular location is the periplasm. In terms of biological role, part of the ABC transporter complex ArtPIQMJ involved in arginine transport. Binds L-arginine with high affinity. The polypeptide is ABC transporter arginine-binding protein 1 (artJ) (Escherichia coli (strain K12)).